Reading from the N-terminus, the 502-residue chain is Probable cytosol aminopeptidase (502 aa).

Residues Lys267 and Asp272 each coordinate Mn(2+). Residue Lys279 is part of the active site. 3 residues coordinate Mn(2+): Asp290, Asp349, and Glu351. Arg353 is an active-site residue.

It belongs to the peptidase M17 family. The cofactor is Mn(2+).

It is found in the cytoplasm. It catalyses the reaction Release of an N-terminal amino acid, Xaa-|-Yaa-, in which Xaa is preferably Leu, but may be other amino acids including Pro although not Arg or Lys, and Yaa may be Pro. Amino acid amides and methyl esters are also readily hydrolyzed, but rates on arylamides are exceedingly low.. It carries out the reaction Release of an N-terminal amino acid, preferentially leucine, but not glutamic or aspartic acids.. Presumably involved in the processing and regular turnover of intracellular proteins. Catalyzes the removal of unsubstituted N-terminal amino acids from various peptides. This is Probable cytosol aminopeptidase from Aeromonas hydrophila subsp. hydrophila (strain ATCC 7966 / DSM 30187 / BCRC 13018 / CCUG 14551 / JCM 1027 / KCTC 2358 / NCIMB 9240 / NCTC 8049).